We begin with the raw amino-acid sequence, 87 residues long: Kappa-2-bungarotoxin (87 aa).

The first 21 residues, 1–21, serve as a signal peptide directing secretion; sequence MKTLLLTLVVVTIVCLDLGYT. 5 disulfide bridges follow: cysteine 24–cysteine 42, cysteine 35–cysteine 63, cysteine 48–cysteine 52, cysteine 67–cysteine 79, and cysteine 80–cysteine 85.

It belongs to the three-finger toxin family. Long-chain subfamily. Kappa-neurotoxin sub-subfamily. In terms of assembly, homodimer and heterodimer with kappa 3-bungarotoxin; non-covalently linked. In terms of tissue distribution, expressed by the venom gland.

Its subcellular location is the secreted. Postsynaptic neurotoxin that binds and inhibits neuronal nicotinic acetylcholine receptors (nAChR) with high affinity (IC(50)&lt;100 nM). Is a selective, and slowly reversible antagonist of alpha-3/CHRNA3-containing and some alpha-4/CHRNA4-containing AChRs. The polypeptide is Kappa-2-bungarotoxin (Bungarus multicinctus (Many-banded krait)).